Reading from the N-terminus, the 191-residue chain is Thioredoxin F-type, chloroplastic (191 aa).

The 123-residue stretch at 68 to 190 (KASLETAVGA…LVAAIEAARS (123 aa)) folds into the Thioredoxin domain. Active-site nucleophile residues include Cys-115 and Cys-118. Cys-115 and Cys-118 are oxidised to a cystine.

It belongs to the thioredoxin family. Plant F-type subfamily. Forms a complex with heterodimeric ferredoxin-thioredoxin reductase (FTR) and ferredoxin.

It is found in the plastid. Its subcellular location is the chloroplast. In terms of biological role, participates in various redox reactions through the reversible oxidation of the active center dithiol to a disulfide. The F form is known to activate a number of enzymes of the photosynthetic carbon cycle. The sequence is that of Thioredoxin F-type, chloroplastic from Mesembryanthemum crystallinum (Common ice plant).